Reading from the N-terminus, the 212-residue chain is Small ribosomal subunit protein uS3 (212 aa).

Residues 38–106 form the KH type-2 domain; that stretch reads IRKFVKKTLY…EFAIEVNEIR (69 aa).

Belongs to the universal ribosomal protein uS3 family. As to quaternary structure, part of the 30S ribosomal subunit. Forms a tight complex with proteins S10 and S14.

Binds the lower part of the 30S subunit head. Binds mRNA in the 70S ribosome, positioning it for translation. The sequence is that of Small ribosomal subunit protein uS3 from Nitratidesulfovibrio vulgaris (strain ATCC 29579 / DSM 644 / CCUG 34227 / NCIMB 8303 / VKM B-1760 / Hildenborough) (Desulfovibrio vulgaris).